The primary structure comprises 289 residues: Glucosamine-6-phosphate deaminase 1 (289 aa).

Residue lysine 64 is modified to N6-acetyllysine. Aspartate 72 acts as the Proton acceptor; for enolization step in catalysis. Residue aspartate 141 is the For ring-opening step of the active site. The active-site Proton acceptor; for ring-opening step is the histidine 143. Glutamate 148 (for ring-opening step) is an active-site residue. Threonine 161 is modified (phosphothreonine).

This sequence belongs to the glucosamine/galactosamine-6-phosphate isomerase family. As to quaternary structure, homohexamer.

Its subcellular location is the cytoplasm. The catalysed reaction is alpha-D-glucosamine 6-phosphate + H2O = beta-D-fructose 6-phosphate + NH4(+). Its pathway is nucleotide-sugar biosynthesis; UDP-N-acetyl-alpha-D-glucosamine biosynthesis; alpha-D-glucosamine 6-phosphate from D-fructose 6-phosphate: step 1/1. Its activity is regulated as follows. Allosterically activated by N-acetylglucosamine-6-phosphate (GlcNAc6P). Functionally, catalyzes the reversible conversion of alpha-D-glucosamine 6-phosphate (GlcN-6P) into beta-D-fructose 6-phosphate (Fru-6P) and ammonium ion, a regulatory reaction step in de novo uridine diphosphate-N-acetyl-alpha-D-glucosamine (UDP-GlcNAc) biosynthesis via hexosamine pathway. Deamination is coupled to aldo-keto isomerization mediating the metabolic flux from UDP-GlcNAc toward Fru-6P. At high ammonium level can drive amination and isomerization of Fru-6P toward hexosamines and UDP-GlcNAc synthesis. Has a role in fine tuning the metabolic fluctuations of cytosolic UDP-GlcNAc and their effects on hyaluronan synthesis that occur during tissue remodeling. Seems to trigger calcium oscillations in mammalian eggs. These oscillations serve as the essential trigger for egg activation and early development of the embryo. The protein is Glucosamine-6-phosphate deaminase 1 of Homo sapiens (Human).